The following is a 116-amino-acid chain: MLRARNRMRRSADFETTVKHGMRTVRSDMVVYWWRGSGGGPRVGLIIAKSVGSAVERHRVARRLRHVAGSIVKELHPSDHVVIRALPSSRHVSSARLEQQLRCGLRRAVELAGSDR.

The protein belongs to the RnpA family. In terms of assembly, consists of a catalytic RNA component (M1 or rnpB) and a protein subunit.

The enzyme catalyses Endonucleolytic cleavage of RNA, removing 5'-extranucleotides from tRNA precursor.. RNaseP catalyzes the removal of the 5'-leader sequence from pre-tRNA to produce the mature 5'-terminus. It can also cleave other RNA substrates such as 4.5S RNA. The protein component plays an auxiliary but essential role in vivo by binding to the 5'-leader sequence and broadening the substrate specificity of the ribozyme. The chain is Ribonuclease P protein component from Mycobacterium bovis (strain ATCC BAA-935 / AF2122/97).